Reading from the N-terminus, the 283-residue chain is Pantothenate synthetase (283 aa).

ATP is bound at residue 30–37; it reads MGNLHSGH. His-37 functions as the Proton donor in the catalytic mechanism. Gln-61 contributes to the (R)-pantoate binding site. Residue Gln-61 participates in beta-alanine binding. Residue 149–152 participates in ATP binding; it reads GQKD. (R)-pantoate is bound at residue Gln-155. ATP contacts are provided by residues Val-178 and 186–189; that span reads LSSR.

Belongs to the pantothenate synthetase family. As to quaternary structure, homodimer.

The protein resides in the cytoplasm. The catalysed reaction is (R)-pantoate + beta-alanine + ATP = (R)-pantothenate + AMP + diphosphate + H(+). The protein operates within cofactor biosynthesis; (R)-pantothenate biosynthesis; (R)-pantothenate from (R)-pantoate and beta-alanine: step 1/1. Its function is as follows. Catalyzes the condensation of pantoate with beta-alanine in an ATP-dependent reaction via a pantoyl-adenylate intermediate. The polypeptide is Pantothenate synthetase (Pseudomonas fluorescens (strain SBW25)).